Consider the following 612-residue polypeptide: Glutamine--fructose-6-phosphate aminotransferase [isomerizing] (612 aa).

Catalysis depends on Cys-2, which acts as the Nucleophile; for GATase activity. One can recognise a Glutamine amidotransferase type-2 domain in the interval Cys-2–Ser-221. SIS domains lie at Phe-289 to Ile-429 and Leu-461 to Pro-602. The active-site For Fru-6P isomerization activity is Lys-607.

Homodimer.

It is found in the cytoplasm. The enzyme catalyses D-fructose 6-phosphate + L-glutamine = D-glucosamine 6-phosphate + L-glutamate. Catalyzes the first step in hexosamine metabolism, converting fructose-6P into glucosamine-6P using glutamine as a nitrogen source. In Wigglesworthia glossinidia brevipalpis, this protein is Glutamine--fructose-6-phosphate aminotransferase [isomerizing].